Reading from the N-terminus, the 320-residue chain is Aspartate carbamoyltransferase catalytic subunit (320 aa).

Carbamoyl phosphate is bound by residues arginine 68 and threonine 69. Lysine 96 contacts L-aspartate. Carbamoyl phosphate-binding residues include arginine 118, histidine 148, and glutamine 151. The L-aspartate site is built by arginine 181 and arginine 236. The carbamoyl phosphate site is built by glycine 277 and proline 278.

The protein belongs to the aspartate/ornithine carbamoyltransferase superfamily. ATCase family. Heterododecamer (2C3:3R2) of six catalytic PyrB chains organized as two trimers (C3), and six regulatory PyrI chains organized as three dimers (R2).

The catalysed reaction is carbamoyl phosphate + L-aspartate = N-carbamoyl-L-aspartate + phosphate + H(+). The protein operates within pyrimidine metabolism; UMP biosynthesis via de novo pathway; (S)-dihydroorotate from bicarbonate: step 2/3. Functionally, catalyzes the condensation of carbamoyl phosphate and aspartate to form carbamoyl aspartate and inorganic phosphate, the committed step in the de novo pyrimidine nucleotide biosynthesis pathway. The polypeptide is Aspartate carbamoyltransferase catalytic subunit (Polaromonas sp. (strain JS666 / ATCC BAA-500)).